The sequence spans 277 residues: 3-methyl-2-oxobutanoate hydroxymethyltransferase (277 aa).

Mg(2+) contacts are provided by Asp53 and Asp96. Residues 53-54 (DS), Asp96, and Lys126 contribute to the 3-methyl-2-oxobutanoate site. Position 128 (Glu128) interacts with Mg(2+). Glu195 (proton acceptor) is an active-site residue.

Belongs to the PanB family. As to quaternary structure, homodecamer; pentamer of dimers. The cofactor is Mg(2+).

It is found in the cytoplasm. The catalysed reaction is 3-methyl-2-oxobutanoate + (6R)-5,10-methylene-5,6,7,8-tetrahydrofolate + H2O = 2-dehydropantoate + (6S)-5,6,7,8-tetrahydrofolate. The protein operates within cofactor biosynthesis; (R)-pantothenate biosynthesis; (R)-pantoate from 3-methyl-2-oxobutanoate: step 1/2. Functionally, catalyzes the reversible reaction in which hydroxymethyl group from 5,10-methylenetetrahydrofolate is transferred onto alpha-ketoisovalerate to form ketopantoate. This chain is 3-methyl-2-oxobutanoate hydroxymethyltransferase, found in Chlorobium phaeobacteroides (strain BS1).